We begin with the raw amino-acid sequence, 313 residues long: Olfactory receptor 1M1 (313 aa).

The Extracellular segment spans residues 1–25 (MEPQNHTSASEFILLGLSEKPDHDP). Asn5 carries N-linked (GlcNAc...) asparagine glycosylation. A helical transmembrane segment spans residues 26 to 46 (VLFSLFLCMYMITVVGNLLII). Over 47-54 (LAISFDSH) the chain is Cytoplasmic. The helical transmembrane segment at 55–75 (LHTPMYFFLANLSLVDFCLAT) threads the bilayer. Residues 76–97 (NTVPKMLVNIQTRNKSISYPCC) are Extracellular-facing. An N-linked (GlcNAc...) asparagine glycan is attached at Asn89. A disulfide bridge connects residues Cys97 and Cys179. A helical membrane pass occupies residues 98–118 (LTQMYFFHFFGIMDSVLIAVM). Residues 119–142 (AYDRFVAICHPLHYSTIMSPRLCG) lie on the Cytoplasmic side of the membrane. A helical transmembrane segment spans residues 143–163 (LLVGVPWVYSCFISLTHILLM). Residues 164–196 (ARLVFCGKNELPHYFCDLTPLLRLSCTDTTVNK) are Extracellular-facing. The chain crosses the membrane as a helical span at residues 197–217 (IFVLIVAGMVIATPFVCILAS). Over 218–244 (YARIIVAIMKVPSAGGRKKAFSTCSSH) the chain is Cytoplasmic. The helical transmembrane segment at 245–265 (LSVVALFYGTTIGVYLCPSSV) threads the bilayer. The Extracellular portion of the chain corresponds to 266–274 (RTAVKEKAS). The chain crosses the membrane as a helical span at residues 275–292 (AVMYTAVTPMLNPFIYSL). The Cytoplasmic segment spans residues 293-313 (RNRDLKGALKKIINRKISTSS).

Belongs to the G-protein coupled receptor 1 family. Expressed in testis.

Its subcellular location is the cell membrane. Odorant receptor. The protein is Olfactory receptor 1M1 of Mus musculus (Mouse).